A 113-amino-acid polypeptide reads, in one-letter code: Large ribosomal subunit protein bL19 (113 aa).

It belongs to the bacterial ribosomal protein bL19 family.

In terms of biological role, this protein is located at the 30S-50S ribosomal subunit interface and may play a role in the structure and function of the aminoacyl-tRNA binding site. In Corynebacterium efficiens (strain DSM 44549 / YS-314 / AJ 12310 / JCM 11189 / NBRC 100395), this protein is Large ribosomal subunit protein bL19.